The primary structure comprises 165 residues: Lipoprotein signal peptidase (165 aa).

The next 4 membrane-spanning stretches (helical) occupy residues 7–27 (YFSS…LVLL), 46–66 (AVTS…FSFL), 72–92 (WQRY…IYLL), and 100–120 (LFCW…IDRV). Active-site residues include Asp127 and Asp145. The chain crosses the membrane as a helical span at residues 136–156 (WHWPAFNIADSAICIGAVLFI).

Belongs to the peptidase A8 family.

It localises to the cell inner membrane. The catalysed reaction is Release of signal peptides from bacterial membrane prolipoproteins. Hydrolyzes -Xaa-Yaa-Zaa-|-(S,diacylglyceryl)Cys-, in which Xaa is hydrophobic (preferably Leu), and Yaa (Ala or Ser) and Zaa (Gly or Ala) have small, neutral side chains.. The protein operates within protein modification; lipoprotein biosynthesis (signal peptide cleavage). Its function is as follows. This protein specifically catalyzes the removal of signal peptides from prolipoproteins. The sequence is that of Lipoprotein signal peptidase from Janthinobacterium sp. (strain Marseille) (Minibacterium massiliensis).